Consider the following 471-residue polypeptide: Putative multidrug resistance protein MdtD (471 aa).

At Met-1–Gln-11 the chain is on the periplasmic side. Residues Leu-12 to Ala-32 form a helical membrane-spanning segment. The Cytoplasmic segment spans residues Leu-33–His-48. A helical membrane pass occupies residues Met-49–Ala-69. The Periplasmic segment spans residues Asp-70 to Asn-76. The helical transmembrane segment at Ile-77–Thr-97 threads the bilayer. The Cytoplasmic segment spans residues Leu-98–Leu-101. Residues Leu-102 to Met-124 traverse the membrane as a helical segment. Residues Lys-125–Thr-137 lie on the Periplasmic side of the membrane. A helical transmembrane segment spans residues Phe-138 to Val-158. Residues Glu-159–His-164 lie on the Cytoplasmic side of the membrane. A helical transmembrane segment spans residues Trp-165 to Met-185. Over Pro-186 to Asp-196 the chain is Periplasmic. The chain crosses the membrane as a helical span at residues Leu-197–Ser-217. Topologically, residues Lys-218–Pro-224 are cytoplasmic. A helical membrane pass occupies residues Leu-225–Ala-245. Over Arg-246–Thr-262 the chain is Periplasmic. Residues Phe-263–Met-283 form a helical membrane-spanning segment. The Cytoplasmic portion of the chain corresponds to Thr-284–Pro-285. The helical transmembrane segment at Val-286 to Met-306 threads the bilayer. At Val-307–Thr-341 the chain is on the periplasmic side. The helical transmembrane segment at Leu-342 to Leu-362 threads the bilayer. At Gln-363–Ser-395 the chain is on the cytoplasmic side. Residues Met-396–Phe-416 traverse the membrane as a helical segment. The Periplasmic segment spans residues Gly-417–Thr-430. A helical membrane pass occupies residues Val-431–Ala-451. The Cytoplasmic segment spans residues Arg-452–Gln-471.

Belongs to the major facilitator superfamily. TCR/Tet family.

It localises to the cell inner membrane. This chain is Putative multidrug resistance protein MdtD, found in Escherichia coli (strain SE11).